Reading from the N-terminus, the 245-residue chain is MAGLELLSDQGYRVDGRRAGELRKIQARMGVFAQADGSAYIEQGNTKALAVVYGPHEIRGSRARALPDRALVNCQYSSATFSTGERKRRPHGDRKSCEMGLQLRQTFEAAILTQLHPRSQIDIYVQVLQADGGTYAACVNAATLAVLDAGIPMRDFVCACSAGFVDGTALADLSHVEEAAGGPQLALALLPASGQIALLEMDARLHEDHLERVLEAAAQAARDVHTLLDRVVRQHVREASILLGD.

Ala-2 carries the post-translational modification N-acetylalanine.

Belongs to the RNase PH family. Component of the RNA exosome core complex (Exo-9), composed of EXOSC1, EXOSC2, EXOSC3, EXOSC4, EXOSC5, EXOSC6, EXOSC7, EXOSC8 and EXOSC9; within the complex interacts with EXOSC2, EXOSC7 and EXOSC9. The catalytically inactive RNA exosome core complex (Exo-9) associates with the catalytic subunit EXOSC10/RRP6. Exo-9 may associate with DIS3 to form the nucleolar exosome complex, or DIS3L to form the cytoplasmic exosome complex. Exo-9 is formed by a hexameric base ring consisting of the heterodimers EXOSC4-EXOSC9, EXOSC5-EXOSC8 and EXOSC6-EXOSC7, and a cap ring consisting of EXOSC1, EXOSC2 and EXOSC3. The RNA exosome complex associates with cofactors C1D/RRP47, MPHOSPH6/MPP6 and MTREX/MTR4. Interacts with DDX60. Interacts with DIS3; the interaction is direct.

It is found in the cytoplasm. The protein localises to the nucleus. It localises to the nucleolus. The protein resides in the nucleoplasm. Non-catalytic component of the RNA exosome complex which has 3'-&gt;5' exoribonuclease activity and participates in a multitude of cellular RNA processing and degradation events. In the nucleus, the RNA exosome complex is involved in proper maturation of stable RNA species such as rRNA, snRNA and snoRNA, in the elimination of RNA processing by-products and non-coding 'pervasive' transcripts, such as antisense RNA species and promoter-upstream transcripts (PROMPTs), and of mRNAs with processing defects, thereby limiting or excluding their export to the cytoplasm. The RNA exosome may be involved in Ig class switch recombination (CSR) and/or Ig variable region somatic hypermutation (SHM) by targeting AICDA deamination activity to transcribed dsDNA substrates. In the cytoplasm, the RNA exosome complex is involved in general mRNA turnover and specifically degrades inherently unstable mRNAs containing AU-rich elements (AREs) within their 3' untranslated regions, and in RNA surveillance pathways, preventing translation of aberrant mRNAs. It seems to be involved in degradation of histone mRNA. The catalytic inactive RNA exosome core complex of 9 subunits (Exo-9) is proposed to play a pivotal role in the binding and presentation of RNA for ribonucleolysis, and to serve as a scaffold for the association with catalytic subunits and accessory proteins or complexes. EXOSC4 binds to ARE-containing RNAs. The chain is Exosome complex component RRP41 (EXOSC4) from Homo sapiens (Human).